A 495-amino-acid chain; its full sequence is Pleckstrin homology domain-containing family O member 2 (495 aa).

The 103-residue stretch at 18-120 (TADKAGWIKK…WIKALNEGIN (103 aa)) folds into the PH domain. A phosphoserine mark is found at serine 165 and serine 168. A disordered region spans residues 171–411 (LSRLDLDVPD…ESPQHPRLPK (241 aa)). Pro residues predominate over residues 198–213 (QEPPRALMPPVKPSPG). A Phosphothreonine modification is found at threonine 233. The span at 235–244 (DSASSGANPE) shows a compositional bias: polar residues. A phosphoserine mark is found at serine 236, serine 238, serine 239, serine 274, and serine 292. The residue at position 296 (threonine 296) is a Phosphothreonine. Over residues 324–335 (SGVDASGSSQSS) the composition is skewed to low complexity. Residues 336–350 (EAPETTSPEPTQVSV) are compositionally biased toward polar residues. At serine 395 the chain carries Phosphoserine. Residues 399–411 (LLRESPQHPRLPK) are compositionally biased toward basic and acidic residues. Positions 444 to 469 (CAESLLSQAVEQLRQATQVLQEMRDL) form a coiled coil.

The chain is Pleckstrin homology domain-containing family O member 2 (Plekho2) from Mus musculus (Mouse).